The chain runs to 1164 residues: Toxin subunit YenA1 (1164 aa).

Residues 106 to 131 (RLEKSNSPLVPQTSSSTDASSESQTN) are disordered. A compositionally biased stretch (low complexity) spans 118 to 130 (TSSSTDASSESQT).

As to quaternary structure, semipurified toxin complex consists of at least YenA1, YenA2, YenB, YenC1, YenC2, Chi1 and Chi2. The Yen-TC:K9 subcomplex is about 26 nm tall and 22 nm in diameter with 5-fold symmetry and 5 copies of YenA1, YenA2, Chi1 and Chi2; the chitinase subunits may be solvent accessible on the exterior the complex. The Yen-TC:K9 subcomplex has no insecticidal activity. The native complex with additional YenB, YenC1 and YenC2 subunits is 16 nm taller and is insecticidal; the toxicity-conferring subunits are present at about 1 copy each.

The protein localises to the secreted. Its activity is regulated as follows. Toxin complex is secreted when grown at 25 degrees Celsius or less; at higher temperatures the proteins are present intracellularly but not secreted. Its function is as follows. Part of an orally active toxin complex (TC) with strong insecticidal effects on larvae of the Coleoptera Costelytra zealandica, Acrossidius tasmania and Adoryphorus couloni and some Lepidoptera larvae. The TC has an endochitinase activity. This chain is Toxin subunit YenA1, found in Yersinia entomophaga.